A 714-amino-acid chain; its full sequence is RanBP-type and C3HC4-type zinc finger-containing protein 1 (714 aa).

Disordered regions lie at residues 1–23 (MSLSSGGWTRASPPAQSSSSHLG) and 152–172 (SSSTEEGRLPPPPLATQSKAP). The segment covering 14–23 (PAQSSSSHLG) has biased composition (polar residues). In terms of domain architecture, Ubiquitin-like spans 225-301 (LAVVVEDASS…TAFLYLISAR (77 aa)). The segment at 394-426 (RTSIQPGWACPTCTYINKPTRPGCEMCSADRPE) adopts a RanBP2-type zinc-finger fold. Residues 482–710 (ERVECRICYV…VNKQRCHPKC (229 aa)) form a TRIAD supradomain region. Residues C486, C489, C504, H506, C509, C512, C527, C536, C575, C580, C595, C598, C603, C606, H610, C615, C651, and C654 each coordinate Zn(2+). The RING-type 1 zinc finger occupies 486–536 (CRICYVELESGEGVLLRECLHCFCKECLRSVILMSEDPQVACPYRDESYAC). An IBR-type zinc finger spans residues 555–615 (QHWLQRGLSV…CKAIHEGMNC (61 aa)). The RING-type 2; atypical zinc-finger motif lies at 651–680 (CPQCGIIVQKKEGCDWLRCTVCHTEICWVT). C664 is an active-site residue. Residues C669 and C672 each coordinate Zn(2+).

The protein belongs to the RBR family. As to quaternary structure, component of the LUBAC complex (linear ubiquitin chain assembly complex).

The enzyme catalyses [E2 ubiquitin-conjugating enzyme]-S-ubiquitinyl-L-cysteine + [acceptor protein]-L-lysine = [E2 ubiquitin-conjugating enzyme]-L-cysteine + [acceptor protein]-N(6)-ubiquitinyl-L-lysine.. It participates in protein modification; protein ubiquitination. Component of the LUBAC complex which conjugates linear ('Met-1'-linked) polyubiquitin chains to substrates and plays a key role in NF-kappa-B activation and regulation of inflammation. LUBAC conjugates linear polyubiquitin to ikbkg and RIPK1 and is involved in activation of the canonical NF-kappa-B and the JNK signaling pathways. Linear ubiquitination mediated by the LUBAC complex interferes with TNF-induced cell death and thereby prevents inflammation. LUBAC is recruited to the TNF-R1 signaling complex (TNF-RSC) to conjugate linear polyubiquitin to ikbkg and possibly other components contributing to the stability of the complex. The LUBAC complex is also involved in innate immunity by conjugating linear polyubiquitin chains at the surface of bacteria invading the cytosol to form the ubiquitin coat surrounding bacteria. LUBAC is not able to initiate formation of the bacterial ubiquitin coat, and can only promote formation of linear polyubiquitins on pre-existing ubiquitin. The bacterial ubiquitin coat acts as an 'eat-me' signal for xenophagy and promotes NF-kappa-B activation. Binds polyubiquitin of different linkage types. In Danio rerio (Zebrafish), this protein is RanBP-type and C3HC4-type zinc finger-containing protein 1 (rbck1).